The primary structure comprises 205 residues: Holliday junction branch migration complex subunit RuvA (205 aa).

Residues Met1–Arg64 are domain I. The tract at residues Ser65–Ile143 is domain II. The interval Arg144 to Ala154 is flexible linker. Residues Ala154–Lys205 form a domain III region.

It belongs to the RuvA family. In terms of assembly, homotetramer. Forms an RuvA(8)-RuvB(12)-Holliday junction (HJ) complex. HJ DNA is sandwiched between 2 RuvA tetramers; dsDNA enters through RuvA and exits via RuvB. An RuvB hexamer assembles on each DNA strand where it exits the tetramer. Each RuvB hexamer is contacted by two RuvA subunits (via domain III) on 2 adjacent RuvB subunits; this complex drives branch migration. In the full resolvosome a probable DNA-RuvA(4)-RuvB(12)-RuvC(2) complex forms which resolves the HJ.

The protein localises to the cytoplasm. In terms of biological role, the RuvA-RuvB-RuvC complex processes Holliday junction (HJ) DNA during genetic recombination and DNA repair, while the RuvA-RuvB complex plays an important role in the rescue of blocked DNA replication forks via replication fork reversal (RFR). RuvA specifically binds to HJ cruciform DNA, conferring on it an open structure. The RuvB hexamer acts as an ATP-dependent pump, pulling dsDNA into and through the RuvAB complex. HJ branch migration allows RuvC to scan DNA until it finds its consensus sequence, where it cleaves and resolves the cruciform DNA. This is Holliday junction branch migration complex subunit RuvA from Bradyrhizobium sp. (strain BTAi1 / ATCC BAA-1182).